Here is a 264-residue protein sequence, read N- to C-terminus: Thymidylate synthase (264 aa).

Residue Arg-21 coordinates dUMP. His-51 contacts (6R)-5,10-methylene-5,6,7,8-tetrahydrofolate. 126–127 serves as a coordination point for dUMP; sequence RR. The active-site Nucleophile is the Cys-146. DUMP is bound by residues 166-169, Asn-177, and 207-209; these read RSCD and HLY. Asp-169 lines the (6R)-5,10-methylene-5,6,7,8-tetrahydrofolate pocket. Ala-263 contributes to the (6R)-5,10-methylene-5,6,7,8-tetrahydrofolate binding site.

Belongs to the thymidylate synthase family. Bacterial-type ThyA subfamily. In terms of assembly, homodimer.

It is found in the cytoplasm. The catalysed reaction is dUMP + (6R)-5,10-methylene-5,6,7,8-tetrahydrofolate = 7,8-dihydrofolate + dTMP. The protein operates within pyrimidine metabolism; dTTP biosynthesis. Catalyzes the reductive methylation of 2'-deoxyuridine-5'-monophosphate (dUMP) to 2'-deoxythymidine-5'-monophosphate (dTMP) while utilizing 5,10-methylenetetrahydrofolate (mTHF) as the methyl donor and reductant in the reaction, yielding dihydrofolate (DHF) as a by-product. This enzymatic reaction provides an intracellular de novo source of dTMP, an essential precursor for DNA biosynthesis. This is Thymidylate synthase from Aeromonas hydrophila subsp. hydrophila (strain ATCC 7966 / DSM 30187 / BCRC 13018 / CCUG 14551 / JCM 1027 / KCTC 2358 / NCIMB 9240 / NCTC 8049).